A 503-amino-acid chain; its full sequence is SusD-like protein P38 (503 aa).

Residues 1-21 form the signal peptide; that stretch reads MKKFKNISITFLILISLGVLN.

It belongs to the SusD family.

Its subcellular location is the cell outer membrane. Its function is as follows. Polysaccharide-binding protein probably involved in ulvan degradation. Ulvan is the main polysaccharide component of the Ulvales (green seaweed) cell wall. It is composed of disaccharide building blocks comprising 3-sulfated rhamnose (Rha3S) linked to D-glucuronic acid (GlcA), L-iduronic acid (IduA), or D-xylose (Xyl). The SusD-like protein may mediate ulvan oligomer-binding before transport in the periplasm for further degradation. This Formosa agariphila (strain DSM 15362 / KCTC 12365 / LMG 23005 / KMM 3901 / M-2Alg 35-1) protein is SusD-like protein P38.